Reading from the N-terminus, the 550-residue chain is Glucose-6-phosphate isomerase (550 aa).

The active-site Proton donor is glutamate 356. Active-site residues include histidine 387 and lysine 515.

This sequence belongs to the GPI family.

The protein localises to the cytoplasm. The enzyme catalyses alpha-D-glucose 6-phosphate = beta-D-fructose 6-phosphate. Its pathway is carbohydrate biosynthesis; gluconeogenesis. The protein operates within carbohydrate degradation; glycolysis; D-glyceraldehyde 3-phosphate and glycerone phosphate from D-glucose: step 2/4. Catalyzes the reversible isomerization of glucose-6-phosphate to fructose-6-phosphate. The protein is Glucose-6-phosphate isomerase of Vibrio cholerae serotype O1 (strain ATCC 39315 / El Tor Inaba N16961).